Consider the following 621-residue polypeptide: 1-deoxy-D-xylulose-5-phosphate synthase (621 aa).

Thiamine diphosphate-binding positions include His76 and Ala117–Ser119. Asp148 is a Mg(2+) binding site. Residues Gly149 to Ala150, Asn178, Tyr285, and Glu367 each bind thiamine diphosphate. Asn178 contributes to the Mg(2+) binding site.

Belongs to the transketolase family. DXPS subfamily. Homodimer. Mg(2+) serves as cofactor. Requires thiamine diphosphate as cofactor.

The catalysed reaction is D-glyceraldehyde 3-phosphate + pyruvate + H(+) = 1-deoxy-D-xylulose 5-phosphate + CO2. It functions in the pathway metabolic intermediate biosynthesis; 1-deoxy-D-xylulose 5-phosphate biosynthesis; 1-deoxy-D-xylulose 5-phosphate from D-glyceraldehyde 3-phosphate and pyruvate: step 1/1. Functionally, catalyzes the acyloin condensation reaction between C atoms 2 and 3 of pyruvate and glyceraldehyde 3-phosphate to yield 1-deoxy-D-xylulose-5-phosphate (DXP). This chain is 1-deoxy-D-xylulose-5-phosphate synthase, found in Aromatoleum aromaticum (strain DSM 19018 / LMG 30748 / EbN1) (Azoarcus sp. (strain EbN1)).